The following is a 229-amino-acid chain: Ribulose-phosphate 3-epimerase (229 aa).

Serine 13 provides a ligand contact to substrate. A divalent metal cation contacts are provided by histidine 36, aspartate 38, and histidine 69. Catalysis depends on aspartate 38, which acts as the Proton acceptor. Substrate is bound by residues histidine 69, 145–148, 178–180, and 200–201; these read GFGG, DGG, and GS. Aspartate 178 lines the a divalent metal cation pocket. The active-site Proton donor is the aspartate 178.

The protein belongs to the ribulose-phosphate 3-epimerase family. The cofactor is a divalent metal cation.

The enzyme catalyses D-ribulose 5-phosphate = D-xylulose 5-phosphate. The protein operates within carbohydrate degradation. Functionally, catalyzes the reversible epimerization of D-ribulose 5-phosphate to D-xylulose 5-phosphate. In Mycobacterium bovis (strain ATCC BAA-935 / AF2122/97), this protein is Ribulose-phosphate 3-epimerase.